The sequence spans 97 residues: Acylphosphatase-2 (97 aa).

Residue alanine 2 is modified to N-acetylalanine. Positions 7–97 (SVDYEVFGTV…LEYSNFSIRY (91 aa)) constitute an Acylphosphatase-like domain. Active-site residues include arginine 22 and asparagine 40. Phosphoserine is present on serine 91.

It belongs to the acylphosphatase family.

The enzyme catalyses an acyl phosphate + H2O = a carboxylate + phosphate + H(+). Its physiological role is not yet clear. The sequence is that of Acylphosphatase-2 (Acyp2) from Rattus norvegicus (Rat).